Reading from the N-terminus, the 175-residue chain is Ribosome maturation factor RimM (175 aa).

Positions 99–172 (EGEFHLLDLV…WLRLTPPPGL (74 aa)) constitute a PRC barrel domain.

It belongs to the RimM family. In terms of assembly, binds ribosomal protein uS19.

The protein resides in the cytoplasm. In terms of biological role, an accessory protein needed during the final step in the assembly of 30S ribosomal subunit, possibly for assembly of the head region. Essential for efficient processing of 16S rRNA. May be needed both before and after RbfA during the maturation of 16S rRNA. It has affinity for free ribosomal 30S subunits but not for 70S ribosomes. The polypeptide is Ribosome maturation factor RimM (Synechococcus sp. (strain WH7803)).